A 247-amino-acid polypeptide reads, in one-letter code: Type III pantothenate kinase (247 aa).

6–13 is a binding site for ATP; that stretch reads DVGNTSIY. 102-105 is a substrate binding site; sequence GADL. The active-site Proton acceptor is the aspartate 104. Position 122 (aspartate 122) interacts with K(+). Threonine 125 contacts ATP. Threonine 176 contacts substrate.

It belongs to the type III pantothenate kinase family. As to quaternary structure, homodimer. NH4(+) is required as a cofactor. Requires K(+) as cofactor.

It is found in the cytoplasm. It catalyses the reaction (R)-pantothenate + ATP = (R)-4'-phosphopantothenate + ADP + H(+). It functions in the pathway cofactor biosynthesis; coenzyme A biosynthesis; CoA from (R)-pantothenate: step 1/5. Its function is as follows. Catalyzes the phosphorylation of pantothenate (Pan), the first step in CoA biosynthesis. The polypeptide is Type III pantothenate kinase (Acholeplasma laidlawii (strain PG-8A)).